Here is a 399-residue protein sequence, read N- to C-terminus: L-methionine gamma-lyase (399 aa).

Pyridoxal 5'-phosphate contacts are provided by residues 59-61 (YTR) and 89-90 (GM). Substrate is bound at residue tyrosine 114. 209-211 (SAT) is a binding site for pyridoxal 5'-phosphate. Lysine 212 carries the N6-(pyridoxal phosphate)lysine modification. A substrate-binding site is contributed by arginine 376.

The protein belongs to the trans-sulfuration enzymes family. L-methionine gamma-lyase subfamily. As to quaternary structure, homotetramer; dimer of active dimers. Pyridoxal 5'-phosphate is required as a cofactor.

It catalyses the reaction L-methionine + H2O = methanethiol + 2-oxobutanoate + NH4(+). Catalyzes the alpha,gamma-elimination of L-methionine to produce methanethiol, 2-oxobutanoate and ammonia. This chain is L-methionine gamma-lyase, found in Pseudomonas deceptionensis.